We begin with the raw amino-acid sequence, 62 residues long: uncharacterized protein (62 aa).

This is an uncharacterized protein from Sinorhizobium fredii (strain NBRC 101917 / NGR234).